The primary structure comprises 61 residues: Protein stunted (61 aa).

A sufficient for mth activation region spans residues 3–15 (AWRAAGITYIQYS).

Belongs to the eukaryotic ATPase epsilon family.

Its function is as follows. Activates the G-protein coupled receptor mth in vitro, leading to increased intracellular calcium ion levels. This chain is Protein stunted, found in Drosophila melanogaster (Fruit fly).